A 149-amino-acid chain; its full sequence is Nucleoside diphosphate kinase (149 aa).

ATP contacts are provided by Lys9, Phe57, Arg85, Thr91, Arg102, and Asn112. His115 functions as the Pros-phosphohistidine intermediate in the catalytic mechanism.

It belongs to the NDK family. It depends on Mg(2+) as a cofactor.

The protein localises to the cytoplasm. The enzyme catalyses a 2'-deoxyribonucleoside 5'-diphosphate + ATP = a 2'-deoxyribonucleoside 5'-triphosphate + ADP. The catalysed reaction is a ribonucleoside 5'-diphosphate + ATP = a ribonucleoside 5'-triphosphate + ADP. In terms of biological role, major role in the synthesis of nucleoside triphosphates other than ATP. The ATP gamma phosphate is transferred to the NDP beta phosphate via a ping-pong mechanism, using a phosphorylated active-site intermediate. The polypeptide is Nucleoside diphosphate kinase (Methanosarcina mazei (strain ATCC BAA-159 / DSM 3647 / Goe1 / Go1 / JCM 11833 / OCM 88) (Methanosarcina frisia)).